The sequence spans 415 residues: ATP-dependent Clp protease ATP-binding subunit ClpX (415 aa).

The ClpX-type ZB domain occupies 1-52 (MAESKNNKKRCSFCGRSENEVGFLITGMNGYICDSCATQAYEITQEAMGAGK). The Zn(2+) site is built by Cys11, Cys14, Cys33, and Cys36. Residue 121-128 (STGTGKTL) coordinates ATP.

It belongs to the ClpX chaperone family. In terms of assembly, component of the ClpX-ClpP complex. Forms a hexameric ring that, in the presence of ATP, binds to fourteen ClpP subunits assembled into a disk-like structure with a central cavity, resembling the structure of eukaryotic proteasomes.

Functionally, ATP-dependent specificity component of the Clp protease. It directs the protease to specific substrates. Can perform chaperone functions in the absence of ClpP. The sequence is that of ATP-dependent Clp protease ATP-binding subunit ClpX from Bacteroides fragilis (strain ATCC 25285 / DSM 2151 / CCUG 4856 / JCM 11019 / LMG 10263 / NCTC 9343 / Onslow / VPI 2553 / EN-2).